The primary structure comprises 247 residues: Sugar fermentation stimulation protein homolog (247 aa).

Belongs to the SfsA family.

This chain is Sugar fermentation stimulation protein homolog, found in Oleidesulfovibrio alaskensis (strain ATCC BAA-1058 / DSM 17464 / G20) (Desulfovibrio alaskensis).